The sequence spans 504 residues: DnaJ homolog subfamily C member 3 (504 aa).

A signal peptide spans 1 to 31 (MVAPGSVTSRLGSVFPFLLVLVDLQYEGAEC). TPR repeat units lie at residues 37-70 (VEKHLELGKKLLAAGQLADALSQFHAAVDGDPDN), 72-104 (IAYYRRATVFLAMGKSKAALPDLTKVIQLKMDF), 105-138 (TAARLQRGHLLLKQGKLDEAEDDFKKVLKSNPSE), 154-187 (MQRLRSQALNAFGSGDYTAAIAFLDKILEVCVWD), 189-221 (ELRELRAECFIKEGEPRKAISDLKAASKLKNDN), 222-255 (TEAFYKISTLYYQLGDHELSLSEVRECLKLDQDH), 268-301 (LNKLIESAEELIRDGRYTDATSKYESVMKTEPSI), 306-339 (VRSKERICHCFSKDEKPVEAIRVCSEVLQMEPDN), and 340-373 (VNALKDRAEAYLIEEMYDEAIQDYETAQEHNEND). Residues cysteine 248 and cysteine 258 are joined by a disulfide bond. Phosphoserine; by FAM20C is present on serine 274. A disulfide bridge links cysteine 313 with cysteine 329. The interval 375-393 (QIREGLEKAQRLLKQSQKR) is flexible linker. The J domain occupies 394–462 (DYYKILGVKR…EMRKKFDDGE (69 aa)). Positions 451–481 (DPEMRKKFDDGEDPLDAESQQGGGGNPFHRS) are disordered.

Interacts with EIF2AK4/GCN2; this interaction occurs under endoplasmic reticulum (ER) stress, hypothermic and amino acid starving stress conditions and inhibits EIF2AK4/GCN2 kinase activity. Interacts with EIF2AK3. Interacts with EIF2AK2. Forms a trimeric complex with DNAJB1 and HSPA8. Interacts with THAP12. As to expression, widely expressed with high level in the pancreas and testis. Also expressed in cell lines with different levels.

It localises to the endoplasmic reticulum. Functionally, involved in the unfolded protein response (UPR) during endoplasmic reticulum (ER) stress. Acts as a negative regulator of the EIF2AK4/GCN2 kinase activity by preventing the phosphorylation of eIF-2-alpha at 'Ser-52' and hence attenuating general protein synthesis under ER stress, hypothermic and amino acid starving stress conditions. Co-chaperone of HSPA8/HSC70, it stimulates its ATPase activity. May inhibit both the autophosphorylation of EIF2AK2/PKR and the ability of EIF2AK2 to catalyze phosphorylation of the EIF2A. May inhibit EIF2AK3/PERK activity. This is DnaJ homolog subfamily C member 3 (DNAJC3) from Homo sapiens (Human).